The sequence spans 925 residues: MDRREFIKSSAAAAACSAAGIAVPSSLSAAENQDGWRWDKSACRFCGTGCGIMVATKNGKIVAVKGDPLAPVNRGLNCIKGYFNAKIMYGEDRITKPLLRVNANGEFDKKGKFQEVSWKRAFDEMEKQFRKTYAELGPTGIGVFGSGQYTIQEGYAISKLIKGGFRSHNIDPNARHCMASAVVGFMQTFGIDEPAGCYDDIELTDTIVTWGANMAEMHPILWSRVSDRKLQNSDKVKVVNLSTYSTRTSNIADIEIIFTPHTDLAIWNYIAREIVYNHPEAIDEEFVKANCVFTTGPVDIGYGMRANIKHPKYLPSELDTAAKEKSTVLSENEGVTLAYLGMKAGDTLENKSTGAPDKHWIIQYEDFKKALAPYTLDFVAKLAKGDPNEDLEEFKKKLKALADLYIEKNRKVVSFWTMGMNQHTRGVWVNEQSYMVHFLLGKQAKPGSGAFSLTGQPSACGTAREVGTFSHRLPADMVVANPKHREITEKIWKIPAGTINPKPGAPYMKIMRDLEDGKVKFVWVHVNNPWQNSANANHWIKAAREMDNFIVVSDPYPGISAKVGDLILPTAMIYEKWGAYGNAERRTQHWRQQVLPVGDAMSDTWQYMEFAKRFKLKDFWGEVKVDGKLTLPNVLDKAVAMGYNPENTLFEVLFANKSAMKFSSDDKIMAGYDNTEVFGDSRNVVGSDGNVFKGYGFFVQKYLWEEYREFGLGHGHDLADFDTYHKVRGLRWPVVDGKETLWRFNTKYDVYAKKDNPNGDFSFYGNKNGALVTGDLAKATSKEKEALKSRAKIFFRPYMDPPEMPSKDYPLWLCTGRVLEHWHSGTMTMRVPELYRAVPEALCFMNEIDGNKFGIKQNDIIWVESRRGKVKARVDFRGRNKPAEGLIYVPWFDENVFINKVCLDATDPLSKQTDFKKCAVKIYKA.

The tat-type signal signal peptide spans 1–30 (MDRREFIKSSAAAAACSAAGIAVPSSLSAA). Residues 36-92 (WRWDKSACRFCGTGCGIMVATKNGKIVAVKGDPLAPVNRGLNCIKGYFNAKIMYGED) enclose the 4Fe-4S Mo/W bis-MGD-type domain. 4 residues coordinate [4Fe-4S] cluster: Cys43, Cys46, Cys50, and Cys78. Mo-bis(molybdopterin guanine dinucleotide) contacts are provided by residues Lys80, Gln148, Asn173, Cys177, 210 to 217 (WGANMAEM), Met418, Gln422, Asn528, 553 to 554 (SD), Lys576, Asp603, and 815 to 824 (TGRVLEHWHS). Trp891 contacts substrate. Residues Asn899 and Lys916 each contribute to the Mo-bis(molybdopterin guanine dinucleotide) site.

It belongs to the prokaryotic molybdopterin-containing oxidoreductase family. NasA/NapA/NarB subfamily. Component of the periplasmic nitrate reductase NapAB complex composed of NapA and NapB. [4Fe-4S] cluster is required as a cofactor. The cofactor is Mo-bis(molybdopterin guanine dinucleotide). Predicted to be exported by the Tat system. The position of the signal peptide cleavage has not been experimentally proven.

It localises to the periplasm. It carries out the reaction 2 Fe(II)-[cytochrome] + nitrate + 2 H(+) = 2 Fe(III)-[cytochrome] + nitrite + H2O. Functionally, catalytic subunit of the periplasmic nitrate reductase complex NapAB. Receives electrons from NapB and catalyzes the reduction of nitrate to nitrite. This Campylobacter fetus subsp. fetus (strain 82-40) protein is Periplasmic nitrate reductase.